The chain runs to 158 residues: NADH-quinone oxidoreductase subunit B (158 aa).

[4Fe-4S] cluster contacts are provided by Cys37, Cys38, Cys102, and Cys132.

The protein belongs to the complex I 20 kDa subunit family. In terms of assembly, NDH-1 is composed of 14 different subunits. Subunits NuoB, C, D, E, F, and G constitute the peripheral sector of the complex. Requires [4Fe-4S] cluster as cofactor.

Its subcellular location is the cell inner membrane. It catalyses the reaction a quinone + NADH + 5 H(+)(in) = a quinol + NAD(+) + 4 H(+)(out). Functionally, NDH-1 shuttles electrons from NADH, via FMN and iron-sulfur (Fe-S) centers, to quinones in the respiratory chain. Couples the redox reaction to proton translocation (for every two electrons transferred, four hydrogen ions are translocated across the cytoplasmic membrane), and thus conserves the redox energy in a proton gradient. This chain is NADH-quinone oxidoreductase subunit B, found in Leptothrix cholodnii (strain ATCC 51168 / LMG 8142 / SP-6) (Leptothrix discophora (strain SP-6)).